Consider the following 300-residue polypeptide: Lysophosphatidic acid:oleoyl-CoA acyltransferase 1 (300 aa).

Residues 33-53 form a helical membrane-spanning segment; that stretch reads LLGILGVKTIIMLPLIMLYLL. Positions 101-106 match the HXXXXD motif motif; the sequence is CTSPLD.

The protein belongs to the 1-acyl-sn-glycerol-3-phosphate acyltransferase family.

It localises to the lipid droplet. The protein localises to the endoplasmic reticulum membrane. It carries out the reaction a 1-acyl-sn-glycero-3-phosphate + an acyl-CoA = a 1,2-diacyl-sn-glycero-3-phosphate + CoA. The enzyme catalyses 1-hexadecanoyl-sn-glycero-3-phosphate + (9Z)-octadecenoyl-CoA = 1-hexadecanoyl-2-(9Z-octadecenoyl)-sn-glycero-3-phosphate + CoA. Acyl-CoA-dependent lysophosphatidic acid acyltransferase with preference for oleoyl-CoA. Involved in triacylglyceride homeostasis and lipid droplet formation. Involved in vacuolar protein sorting. This Saccharomyces cerevisiae (strain ATCC 204508 / S288c) (Baker's yeast) protein is Lysophosphatidic acid:oleoyl-CoA acyltransferase 1.